Reading from the N-terminus, the 472-residue chain is RNA pseudouridine synthase 6, chloroplastic (472 aa).

The transit peptide at 1 to 66 directs the protein to the chloroplast; sequence MASPALTGGY…TDSQNQTTLS (66 aa). The S4 RNA-binding domain maps to 101-208; it reads VLVSEFISKQ…SPRCYEIDWK (108 aa). Asp261 is a catalytic residue.

It belongs to the pseudouridine synthase RluA family.

Its subcellular location is the plastid. It localises to the chloroplast. It carries out the reaction a uridine in RNA = a pseudouridine in RNA. This chain is RNA pseudouridine synthase 6, chloroplastic, found in Arabidopsis thaliana (Mouse-ear cress).